The chain runs to 187 residues: Protein GrpE (187 aa).

This sequence belongs to the GrpE family. In terms of assembly, homodimer.

It localises to the cytoplasm. Its function is as follows. Participates actively in the response to hyperosmotic and heat shock by preventing the aggregation of stress-denatured proteins, in association with DnaK and GrpE. It is the nucleotide exchange factor for DnaK and may function as a thermosensor. Unfolded proteins bind initially to DnaJ; upon interaction with the DnaJ-bound protein, DnaK hydrolyzes its bound ATP, resulting in the formation of a stable complex. GrpE releases ADP from DnaK; ATP binding to DnaK triggers the release of the substrate protein, thus completing the reaction cycle. Several rounds of ATP-dependent interactions between DnaJ, DnaK and GrpE are required for fully efficient folding. The chain is Protein GrpE from Albidiferax ferrireducens (strain ATCC BAA-621 / DSM 15236 / T118) (Rhodoferax ferrireducens).